The chain runs to 234 residues: LexA repressor (234 aa).

Positions 1 to 29 (MSDAANPEGHKRSLPGRPPGIRADSSGLT) are disordered. The segment at residues 52 to 72 (MREIGQAVGLSSTSSVAHQLM) is a DNA-binding region (H-T-H motif). The segment at 90 to 109 (YEVRGSDQAASVQPTDTAGK) is disordered. Active-site for autocatalytic cleavage activity residues include Ser-158 and Lys-195.

Belongs to the peptidase S24 family. As to quaternary structure, homodimer.

The enzyme catalyses Hydrolysis of Ala-|-Gly bond in repressor LexA.. Its function is as follows. Represses a number of genes involved in the response to DNA damage (SOS response), including recA and lexA. In the presence of single-stranded DNA, RecA interacts with LexA causing an autocatalytic cleavage which disrupts the DNA-binding part of LexA, leading to derepression of the SOS regulon and eventually DNA repair. The chain is LexA repressor from Streptomyces coelicolor (strain ATCC BAA-471 / A3(2) / M145).